The sequence spans 263 residues: Oxidoreductase UcpA (263 aa).

NAD(+) is bound at residue 10 to 32 (LITGASQGIGEGIARVFARHGAN). Serine 141 contributes to the substrate binding site. The active-site Proton acceptor is tyrosine 155.

Belongs to the short-chain dehydrogenases/reductases (SDR) family.

The sequence is that of Oxidoreductase UcpA (ucpA) from Salmonella typhi.